Consider the following 275-residue polypeptide: MTLQQQIIKALGAKPQINAEEEIRRSIDFLKSYLKTYPFLKSLVLGISGGQDSTLAGKLCQMAINELRAETGNETLQFIAVRLPYGIQADEQDCQDAIAFIQPDRVLTVNIKGAVLASEQALREAGIELSDFVRGNEKARERMKAQYSIAGMTSGVVVGTDHAAEAITGFFTKYGDGGTDINPLYRLNKRQGKQLLAALGCPEHLYKKAPTADLEDDRPSLPDEAALGVSYDNIDDYLEGKTVPEQVAKTIENWYLKTEHKRRPPITVFDDFWKK.

46-53 (GISGGQDS) is an ATP binding site. Asp52 serves as a coordination point for Mg(2+). Arg140 serves as a coordination point for deamido-NAD(+). Residue Thr160 participates in ATP binding. Glu165 is a binding site for Mg(2+). Residues Lys173 and Asp180 each contribute to the deamido-NAD(+) site. Residues Lys189 and Thr211 each coordinate ATP. 260-261 (HK) contributes to the deamido-NAD(+) binding site.

This sequence belongs to the NAD synthetase family. As to quaternary structure, homodimer.

The catalysed reaction is deamido-NAD(+) + NH4(+) + ATP = AMP + diphosphate + NAD(+) + H(+). Its pathway is cofactor biosynthesis; NAD(+) biosynthesis; NAD(+) from deamido-NAD(+) (ammonia route): step 1/1. In terms of biological role, catalyzes the ATP-dependent amidation of deamido-NAD to form NAD. Uses ammonia as a nitrogen source. The sequence is that of NH(3)-dependent NAD(+) synthetase from Escherichia fergusonii (strain ATCC 35469 / DSM 13698 / CCUG 18766 / IAM 14443 / JCM 21226 / LMG 7866 / NBRC 102419 / NCTC 12128 / CDC 0568-73).